A 195-amino-acid chain; its full sequence is Chromophore lyase CpcT/CpeT 2 (195 aa).

This sequence belongs to the CpcT/CpeT biliprotein lyase family.

Covalently attaches a chromophore to Cys residue(s) of phycobiliproteins. This is Chromophore lyase CpcT/CpeT 2 from Trichodesmium erythraeum (strain IMS101).